We begin with the raw amino-acid sequence, 255 residues long: MAATDLLAGRATLSRSLRLLSAFRFEQTDPDRFYGALASDTVAMVDDLWRATTGTSTRNLTVLDVGGGPGYFASAFTDAGLHYVGVEPDPGEMHAAAPRTHSRAGSFVRASGTALPFADGSVDICLSSNVAEHVAQPWRLGEEMLRVTRPGGLAVLSYTVWLGPFGGHEMGLSHYLGGYRAAERYTRRHGHRPKNDYGSSLFAVSAADGLRWARSTGALAAAFPRYHPRWAWGLTRVPGVREFLVSNLVLVLRPT.

Belongs to the methyltransferase superfamily.

This is an uncharacterized protein from Mycolicibacterium gilvum (strain PYR-GCK) (Mycobacterium gilvum (strain PYR-GCK)).